Reading from the N-terminus, the 110-residue chain is Nucleoid-associated protein bbp_426 (110 aa).

Belongs to the YbaB/EbfC family. In terms of assembly, homodimer.

The protein localises to the cytoplasm. It localises to the nucleoid. Binds to DNA and alters its conformation. May be involved in regulation of gene expression, nucleoid organization and DNA protection. The protein is Nucleoid-associated protein bbp_426 of Buchnera aphidicola subsp. Baizongia pistaciae (strain Bp).